Reading from the N-terminus, the 122-residue chain is Serum amyloid A-1 protein (122 aa).

A signal peptide spans 1–18; that stretch reads MKLLTGLVFCSLVLGVSS. The tract at residues 19–45 is important for amyloid formation; forms amyloid fibrils in vitro; that stretch reads RSFFSFLGEAFDGARDMWRAYSDMREA. A propeptide spans 95–122 (often cleaved during amyloidogenesis); the sequence is LADQAANEWGRSGKDPNHFRPAGLPEKY. The segment at 98–122 is disordered; sequence QAANEWGRSGKDPNHFRPAGLPEKY. Asparagine 101 carries the post-translational modification N4,N4-dimethylasparagine.

This sequence belongs to the SAA family. Homohexamer; dimer of trimers. Can form amyloid fibrils after partial proteolysis; the native, undenatured protein does not form amyloid fibrils (in vitro). Apolipoprotein of the HDL complex. Binds to heparin. In terms of processing, this protein is the precursor of amyloid protein A, which is formed by the removal of approximately 24 residues from the C-terminal end. In terms of tissue distribution, expressed by the liver; secreted in plasma (at protein level).

The protein resides in the secreted. Functionally, major acute phase protein. This chain is Serum amyloid A-1 protein (SAA1), found in Homo sapiens (Human).